The primary structure comprises 517 residues: Type II methyltransferase M.CeqI (517 aa).

Disordered stretches follow at residues 1–21 and 33–62; these read MVVT…RWPR and GRPR…HGRS. A compositionally biased stretch (basic residues) spans 51–62; it reads RPRRGRAPHGRS. 3 TPR repeats span residues 283–316, 361–394, and 476–509; these read AEFY…FENN, ALLL…GDHS, and SELA…RTNM.

It carries out the reaction a 2'-deoxyadenosine in DNA + S-adenosyl-L-methionine = an N(6)-methyl-2'-deoxyadenosine in DNA + S-adenosyl-L-homocysteine + H(+). Functionally, a methylase, recognizes the double-stranded sequence 5'-GATATC-3', methylates A-? on both strands, and protects the DNA from cleavage by the CeqI endonuclease. In Rhodococcus hoagii (Corynebacterium equii), this protein is Type II methyltransferase M.CeqI (ceqIM).